We begin with the raw amino-acid sequence, 105 residues long: UPF0145 protein jk0060 (105 aa).

This sequence belongs to the UPF0145 family.

The polypeptide is UPF0145 protein jk0060 (Corynebacterium jeikeium (strain K411)).